A 498-amino-acid polypeptide reads, in one-letter code: ATP synthase subunit beta, chloroplastic (498 aa).

172–179 (GGAGVGKT) contacts ATP.

The protein belongs to the ATPase alpha/beta chains family. F-type ATPases have 2 components, CF(1) - the catalytic core - and CF(0) - the membrane proton channel. CF(1) has five subunits: alpha(3), beta(3), gamma(1), delta(1), epsilon(1). CF(0) has four main subunits: a(1), b(1), b'(1) and c(9-12).

It localises to the plastid. Its subcellular location is the chloroplast thylakoid membrane. The enzyme catalyses ATP + H2O + 4 H(+)(in) = ADP + phosphate + 5 H(+)(out). Produces ATP from ADP in the presence of a proton gradient across the membrane. The catalytic sites are hosted primarily by the beta subunits. This is ATP synthase subunit beta, chloroplastic from Nicotiana tomentosiformis (Tobacco).